The following is a 1183-amino-acid chain: Formin-like protein (1183 aa).

Disordered stretches follow at residues 1–44 (MGAV…SISS) and 63–82 (QHVR…PTTD). Residues 23 to 36 (PHSHAHHHSMRNGH) show a composition bias toward basic residues. Positions 63-79 (QHVRQPSLRSRSQQPMP) are enriched in polar residues. Residues 76–559 (QPMPTTDELD…HNEQELKKRD (484 aa)) enclose the GBD/FH3 domain. A Phosphoserine modification is found at serine 225. Over residues 572-584 (LSRSLPRSASSGD) the composition is skewed to polar residues. A disordered region spans residues 572–681 (LSRSLPRSAS…PPVAGFMPAP (110 aa)). Composition is skewed to pro residues over residues 605 to 614 (LPPPPPPMPA) and 622 to 640 (APPP…PPGF). The span at 641–654 (SPLGSPSGSLASTA) shows a compositional bias: low complexity. One can recognise an FH2 domain in the interval 687-1088 (IKRKVPTKYK…AALAASKKEN (402 aa)). One can recognise a DAD domain in the interval 1136 to 1169 (DEVYNGALEDILLGLKSEPYRRADAVRRSQRRRI).

Belongs to the formin homology family. In terms of assembly, self-associates. Interacts (via GBD/FH3 domain) with Cdc42; the interaction is stronger with the GTP bound form of Cdc42.

Functionally, together with Cdc42, involved in establishment of planar cell polarity in the developing compound eye by contributing to ommatidial rotation. Together with DAAM and Cdc42, has a role in neuronal development of mushroom bodies. The polypeptide is Formin-like protein (Drosophila melanogaster (Fruit fly)).